The following is a 127-amino-acid chain: Large ribosomal subunit protein bL19 (127 aa).

This sequence belongs to the bacterial ribosomal protein bL19 family.

In terms of biological role, this protein is located at the 30S-50S ribosomal subunit interface and may play a role in the structure and function of the aminoacyl-tRNA binding site. The sequence is that of Large ribosomal subunit protein bL19 from Bradyrhizobium sp. (strain BTAi1 / ATCC BAA-1182).